Reading from the N-terminus, the 235-residue chain is UPF0502 protein Bcep18194_B0081 (235 aa).

Belongs to the UPF0502 family.

In Burkholderia lata (strain ATCC 17760 / DSM 23089 / LMG 22485 / NCIMB 9086 / R18194 / 383), this protein is UPF0502 protein Bcep18194_B0081.